A 337-amino-acid chain; its full sequence is MQKSLITKWLCISCIMVIATIVIGGITRLTGSGLSIVEWRPVTGILPPFSFESWQAEFAKYKAFPEYNSVNYGITLSQFKFIYLLEFIHRLLGRITALIYIVPLIYFYFKDVIKNRDMLPYIIALWLFCVQGFMGWYMVKSGLLNSPYVSHCRLAFHLIIAVIIYHILFYQLIKNRCDILLIPSQTDLKLPLIFSGIAITVVYVQIFLGALVAGLDAGLIYNSFPLMDYSFIPMEIKDNFFDLKNWYDPVFIQFIHRLGGYSVFLVVVVLIICLLKIEHPKLNKIAYFLMIALLMQVSTGIITLLYSVPIIIASIHQLFAVILLSIIIWCCFLIKSS.

The next 5 membrane-spanning stretches (helical) occupy residues 6 to 26, 87 to 107, 119 to 139, 154 to 174, and 192 to 212; these read ITKW…IGGI, FIHR…LIYF, LPYI…WYMV, LAFH…QLIK, and LIFS…GALV. His-256 is a heme binding site. 3 helical membrane passes run 258–278, 285–305, and 308–328; these read LGGY…LKIE, IAYF…ITLL, and VPII…SIII. Residue His-316 coordinates heme.

Belongs to the COX15/CtaA family. Type 2 subfamily. As to quaternary structure, interacts with CtaB. The cofactor is heme b.

Its subcellular location is the cell membrane. It carries out the reaction Fe(II)-heme o + 2 A + H2O = Fe(II)-heme a + 2 AH2. It participates in porphyrin-containing compound metabolism; heme A biosynthesis; heme A from heme O: step 1/1. Catalyzes the conversion of heme O to heme A by two successive hydroxylations of the methyl group at C8. The first hydroxylation forms heme I, the second hydroxylation results in an unstable dihydroxymethyl group, which spontaneously dehydrates, resulting in the formyl group of heme A. This Rickettsia massiliae (strain Mtu5) protein is Heme A synthase.